Here is a 281-residue protein sequence, read N- to C-terminus: Phosphatidylglycerol--prolipoprotein diacylglyceryl transferase (281 aa).

Helical transmembrane passes span 23–43, 71–91, 107–127, and 133–153; these read IGPL…LFAW, FVIW…VLFY, WDGG…MILF, and ILVW…LGVV. A 1,2-diacyl-sn-glycero-3-phospho-(1'-sn-glycerol) is bound at residue Arg-154. 3 helical membrane passes run 189 to 209, 217 to 237, and 247 to 267; these read LYEA…LVWG, GFVA…VEFF, and LFGG…LLGL.

Belongs to the Lgt family.

The protein localises to the cell inner membrane. The catalysed reaction is L-cysteinyl-[prolipoprotein] + a 1,2-diacyl-sn-glycero-3-phospho-(1'-sn-glycerol) = an S-1,2-diacyl-sn-glyceryl-L-cysteinyl-[prolipoprotein] + sn-glycerol 1-phosphate + H(+). It functions in the pathway protein modification; lipoprotein biosynthesis (diacylglyceryl transfer). Catalyzes the transfer of the diacylglyceryl group from phosphatidylglycerol to the sulfhydryl group of the N-terminal cysteine of a prolipoprotein, the first step in the formation of mature lipoproteins. The polypeptide is Phosphatidylglycerol--prolipoprotein diacylglyceryl transferase (Brucella canis (strain ATCC 23365 / NCTC 10854 / RM-666)).